A 54-amino-acid polypeptide reads, in one-letter code: Large ribosomal subunit protein bL33C (54 aa).

The protein belongs to the bacterial ribosomal protein bL33 family.

This is Large ribosomal subunit protein bL33C from Streptomyces griseus subsp. griseus (strain JCM 4626 / CBS 651.72 / NBRC 13350 / KCC S-0626 / ISP 5235).